The sequence spans 1452 residues: ABC-type transporter adrC (1452 aa).

The tract at residues 1 to 38 (MAPEEGDQAMSHEDKAACSSLNTTSSTELFDGAPSSEN) is disordered. The segment covering 19 to 28 (SSLNTTSSTE) has biased composition (polar residues). The ABC transporter 1 domain maps to 116–378 (KRLMSIVGNK…FETMGWKRPP (263 aa)). The next 6 helical transmembrane spans lie at 487 to 507 (IPAL…IGSL), 524 to 544 (VLFL…TTLY), 569 to 589 (VIVD…IVYF), 598 to 618 (SHFF…ATIF), 631 to 651 (AMAL…FTVP), and 738 to 758 (GILV…TELI). In terms of domain architecture, ABC transporter 2 spans 813 to 1055 (FSWKGLSYDI…TVLEYLEDKG (243 aa)). Residue 849–856 (GVSGAGKT) participates in ATP binding. 7 helical membrane-spanning segments follow: residues 1149 to 1169 (YILA…FSFW), 1181 to 1201 (VLFS…QIMP), 1224 to 1244 (VFIL…GICT), 1264 to 1284 (LVLL…QLVV), 1287 to 1307 (VPSV…CLLF), 1322 to 1344 (IFMN…ALHG), and 1415 to 1435 (FGIF…LYYL).

The protein belongs to the ABC transporter superfamily. ABCG family. PDR (TC 3.A.1.205) subfamily.

It is found in the membrane. Functionally, ABC-type transporter; part of the gene cluster that mediates the biosynthesis of the meroterpenoid compound andrastin A, a promising antitumoral compound. Is required for the production of andrastin A but does not have a significant role in its secretion. This is ABC-type transporter adrC from Penicillium roqueforti.